The sequence spans 277 residues: Methyltransferase str3 (277 aa).

Belongs to the methyltransferase superfamily. LaeA methyltransferase family.

The protein operates within mycotoxin biosynthesis. Its function is as follows. Methyltransferase; part of the gene cluster that mediates the biosynthesis of strobilurin A, an antifungal polyketide that contains a key beta-methoxyacrylate toxophore that targets the complex III of the mitochondrial electron transport chain. Strobilurin biosynthesis begins with construction of benzoyl CoA by step-wise elimination of ammonia from phenylalanine by the phenylalanine ammonia-lyase str11, oxygenation by str8 and retro-Claisen reaction to form benzoic acid, which is activated to its CoA thiolester benzoyl CoA by the dedicated CoA ligase str10. Benzoyl CoA forms the starter unit for the highly reducing polyketide synthase stpks1 that produces the polyketide prestrobilutin A. The FAD-dependent oxygenase str9 then catalyzes the key oxidative rearrangement responsible for the creation of the beta-methoxyacrylate toxophore. Str9 performs epoxidation of the 2,3 olefin of prestrobilutin A, followed by Meinwald rearrangement to furnish the aldehyde intermediate. Rapid enolization of the aldehyde intermediate would give the beta-methoxyacrylate skeleton and methylations catalyzed by str2 and str3 complete the synthesis and lead to the production of strobilurin A. The short-chain dehydrogenase stl2 and the dehydrogenase str4 play a role in the shunt pathway leading to the production of bolineol. The cluster encodes no obvious halogenase gene that could be involved in production of strobilurin B, nor any obvious dimethylallyl-transferase that could be involved in the production of strobilurin G. It is possible that unknown proteins encoded in, or near, the cluster (such as str1 or stl1) may form new classes of halogenases or dimethylally-transferases, or that the responsible genes are located elsewhere on the genome. Similarly, proteins encoded by str5/str6 hydrolases appear to have no chemical role in the biosynthesis of strobilurin A. Finally, no obvious self-resistance gene is found within the cluster. This chain is Methyltransferase str3, found in Strobilurus tenacellus.